The following is a 1212-amino-acid chain: Myosin-1 (1212 aa).

Residues Met1 to Thr35 form a disordered region. In terms of domain architecture, Myosin motor spans Val41 to Asp715. Gly134–Thr141 is an ATP binding site. The interval Ser405–Ala487 is actin-binding. 2 IQ domains span residues His719–Ser739 and Ala740–Arg765. A TH1 domain is found at Arg773–Pro962. Disordered stretches follow at residues Asp947 to Ala1064 and Pro1115 to Trp1212. Positions Val954 to Ser966 are enriched in polar residues. 2 stretches are compositionally biased toward low complexity: residues Arg987–Gly998 and Pro1008–Arg1052. Residues Ala1053–Pro1062 are compositionally biased toward pro residues. The 60-residue stretch at Lys1065–Gln1124 folds into the SH3 domain. Pro residues predominate over residues Ala1125 to Pro1140. The segment covering Met1171–Asn1190 has biased composition (polar residues).

It belongs to the TRAFAC class myosin-kinesin ATPase superfamily. Myosin family.

Its subcellular location is the cytoplasm. It localises to the cytoskeleton. The protein localises to the actin patch. Type-I myosin implicated in the organization of the actin cytoskeleton. Required for proper actin cytoskeleton polarization. At the cell cortex, assembles in patch-like structures together with proteins from the actin-polymerizing machinery and promotes actin assembly. Functions as actin nucleation-promoting factor (NPF) for the Arp2/3 complex. This is Myosin-1 (MYO1) from Pyricularia oryzae (strain 70-15 / ATCC MYA-4617 / FGSC 8958) (Rice blast fungus).